The sequence spans 565 residues: Periplasmic trehalase (565 aa).

A signal peptide spans 1-30 (MKSPAPSRPQKMALIPACIFLCFAALSVQA). Substrate contacts are provided by residues R152, 159 to 160 (WD), N196, 205 to 207 (RSQ), 277 to 279 (RPE), and G310. Active-site proton donor/acceptor residues include D312 and E496. E511 provides a ligand contact to substrate. The tract at residues 538-565 (PCDNVPATRPTVKSATTQPSTKEAQPTP) is disordered. The segment covering 548-565 (TVKSATTQPSTKEAQPTP) has biased composition (polar residues).

Belongs to the glycosyl hydrolase 37 family. As to quaternary structure, monomer.

Its subcellular location is the periplasm. It catalyses the reaction alpha,alpha-trehalose + H2O = alpha-D-glucose + beta-D-glucose. In terms of biological role, provides the cells with the ability to utilize trehalose at high osmolarity by splitting it into glucose molecules that can subsequently be taken up by the phosphotransferase-mediated uptake system. The sequence is that of Periplasmic trehalase from Escherichia coli O8 (strain IAI1).